A 92-amino-acid chain; its full sequence is Small ribosomal subunit protein uS19 (92 aa).

It belongs to the universal ribosomal protein uS19 family.

In terms of biological role, protein S19 forms a complex with S13 that binds strongly to the 16S ribosomal RNA. The sequence is that of Small ribosomal subunit protein uS19 from Jannaschia sp. (strain CCS1).